The sequence spans 43 residues: Snake venom metalloproteinase crotalin (43 aa).

In terms of domain architecture, Peptidase M12B spans 1–43; the sequence is LLRRKSHDHAQNHDGDKCLRGASLGYYQSFLNQYKPQCILNKP. Histidine 13 contacts Zn(2+).

Belongs to the venom metalloproteinase (M12B) family. P-I subfamily. As to quaternary structure, monomer. The cofactor is Zn(2+). This protein autoproteolytically degrades to 10 kDa and 14 kDa fragments in the presence of SDS. Interestingly, the two fragments, as well as reduced crotalin are able to bind vWF, indicating that the binding activity does not require a specific protein conformation. In terms of tissue distribution, expressed by the venom gland.

It localises to the secreted. In terms of biological role, snake venom zinc metalloproteinase that inhibits ristocin-induced platelet aggregation by abolishing the binding of von Willebrand factor (vWF) to platelet glycoprotein Ib alpha (GPIBA) through the cleavage of both GP1BA and vWF. Also has fibrinogenolytic activities by degrading the alpha- (FGA) and beta-chain (FGB) of fibrinogen. In vivo, induces a slight hemorrhage when applied to chick chorioallantoic membrane and has potent antithrombic effect. This is Snake venom metalloproteinase crotalin from Crotalus atrox (Western diamondback rattlesnake).